We begin with the raw amino-acid sequence, 266 residues long: NAD kinase 1 (266 aa).

Asp-45 functions as the Proton acceptor in the catalytic mechanism. NAD(+) contacts are provided by residues Asp-45–Gly-46, Asn-122–Glu-123, and Arg-148. Asp-150 contacts ATP. NAD(+)-binding positions include Ser-158 and Thr-161–Ala-166.

Belongs to the NAD kinase family. In terms of assembly, homodimer. The cofactor is Ca(2+). It depends on Mn(2+) as a cofactor.

It is found in the cytoplasm. It catalyses the reaction NAD(+) + ATP = ADP + NADP(+) + H(+). With respect to regulation, allosterically inhibited by NADP and activated by quinolinic acid. Strongly inhibited by HgCl(2). Functionally, involved in the regulation of the intracellular balance of NAD and NADP, and is a key enzyme in the biosynthesis of NADP. Catalyzes specifically the phosphorylation on 2'-hydroxyl of the adenosine moiety of NAD to yield NADP. It can use ATP and other nucleoside triphosphates (GTP, UTP) as well as inorganic polyphosphate (poly(P)) as a source of phosphorus. The protein is NAD kinase 1 (ppnKA) of Bacillus subtilis (strain 168).